The primary structure comprises 320 residues: Endolytic peptidoglycan transglycosylase RlpA (320 aa).

This sequence belongs to the RlpA family.

In terms of biological role, lytic transglycosylase with a strong preference for naked glycan strands that lack stem peptides. The protein is Endolytic peptidoglycan transglycosylase RlpA of Rickettsia typhi (strain ATCC VR-144 / Wilmington).